A 206-amino-acid chain; its full sequence is Cytochrome c oxidase assembly protein CtaG (206 aa).

Residues 1-12 (MSKKPAGKNSNR) are Cytoplasmic-facing. Residues 13–35 (IVAAVCLAFFTGMIGMAYAAVPL) traverse the membrane as a helical; Signal-anchor for type II membrane protein segment. Residues 36-206 (YKMFCQATGY…ISDTEANLGG (171 aa)) are Periplasmic-facing. The interval 184–206 (VASSEPVQGTSKIISDTEANLGG) is disordered. The segment covering 188–206 (EPVQGTSKIISDTEANLGG) has biased composition (polar residues).

This sequence belongs to the COX11/CtaG family.

It localises to the cell inner membrane. In terms of biological role, exerts its effect at some terminal stage of cytochrome c oxidase synthesis, probably by being involved in the insertion of the copper B into subunit I. In Mesorhizobium japonicum (strain LMG 29417 / CECT 9101 / MAFF 303099) (Mesorhizobium loti (strain MAFF 303099)), this protein is Cytochrome c oxidase assembly protein CtaG.